The chain runs to 373 residues: MSTVTKTITVLPGDHVGTEICNEAIKVLEAIEQATPYQKIHFEFKHHLIGGAAIDSTGVPLPDDSLAAAKSSDAVLLGAVGGPKWGTGAVRPEQGLLKIRKELNLYANLRPCNFASDALLELSPLKSEIVKGTNFTVVRELVGGIYFGERQEQEESADGESAWDTEKYSVAEVTRITRMAAFMALQHNPPLPIWSLDKANVLASSRLWRKTVDKVMKEEFPQLTIQHQLIDSAAMILVQSPTKLNGIVITSNMFGDIISDEASVIPGSLGLLPSASLASLPDTNSAFGLYEPCHGSAPDLPENKVNPIATILSVAMMLRLSLDSLKEAEALEEAVRQVLDSGVRTADLRGTNSTKEVGEAVVAAVTKILKDAA.

Position 82 to 93 (82 to 93 (GPKWGTGAVRPE)) interacts with NAD(+). Positions 100, 110, 139, and 231 each coordinate substrate. Mg(2+)-binding residues include D231 and D260. Position 295 to 306 (295 to 306 (GSAPDLPENKVN)) interacts with NAD(+).

The protein belongs to the isocitrate and isopropylmalate dehydrogenases family. Homodimer. Requires Mg(2+) as cofactor. Mn(2+) serves as cofactor.

The protein localises to the cytoplasm. The enzyme catalyses (2R,3S)-3-isopropylmalate + NAD(+) = 4-methyl-2-oxopentanoate + CO2 + NADH. The protein operates within amino-acid biosynthesis; L-leucine biosynthesis; L-leucine from 3-methyl-2-oxobutanoate: step 3/4. Catalyzes the oxidation of 3-carboxy-2-hydroxy-4-methylpentanoate (3-isopropylmalate) to 3-carboxy-4-methyl-2-oxopentanoate. The product decarboxylates to 4-methyl-2 oxopentanoate. The polypeptide is 3-isopropylmalate dehydrogenase (LEU2) (Scheffersomyces stipitis (strain ATCC 58785 / CBS 6054 / NBRC 10063 / NRRL Y-11545) (Yeast)).